The chain runs to 485 residues: Glutamate--tRNA ligase (485 aa).

Positions Pro12–Thr22 match the 'HIGH' region motif. Residues Cys109, Cys111, Cys136, and His138 each coordinate Zn(2+). The short motif at Lys253–Arg257 is the 'KMSKS' region element. Lys256 provides a ligand contact to ATP.

The protein belongs to the class-I aminoacyl-tRNA synthetase family. Glutamate--tRNA ligase type 1 subfamily. In terms of assembly, monomer. Zn(2+) is required as a cofactor.

The protein localises to the cytoplasm. It catalyses the reaction tRNA(Glu) + L-glutamate + ATP = L-glutamyl-tRNA(Glu) + AMP + diphosphate. Functionally, catalyzes the attachment of glutamate to tRNA(Glu) in a two-step reaction: glutamate is first activated by ATP to form Glu-AMP and then transferred to the acceptor end of tRNA(Glu). The protein is Glutamate--tRNA ligase of Agrobacterium fabrum (strain C58 / ATCC 33970) (Agrobacterium tumefaciens (strain C58)).